A 628-amino-acid polypeptide reads, in one-letter code: MDGFAQDWPSLTHTTDNVLTMDQLGGVSGAVGDLPGDVGFEPQTRARSNTWPCPHPEPFVEPADELDSTKASNQQLAAGDSQQTIQSANAAKKNSARRNAWGNLSYADLITHAIGSATDKRLTLSQIYEWMVQNVPYFKDKGDSNSSAGWKNSIRHNLSLHNRFMRVQNEGTGKSSWWMLNPEAKPGKSVRRRAASMETSRYEKRRGRAKKRVEALRQAGVVGLNDATPSPSSSVSEGLDHFPESPLHSGGFQLSPDFRQRASSNASSCGRLSPIRALDLEPEWGFTVDYQNTTLTQAQSQVLDQLAGSIADELKLHPDMLQQQGFSAASGLPTQPPPPPYPAPQQQQQQQPQQQQAYTLNGGPPGGYASLQPQPQCLIHRSLNCSCLHNARDGLSPNSVTTTMSPAYPNSEPSSDSLNTYSNVVIDGSGDNGSLLVQQQRQQQQQQQQQQQLGSNLEGQCLEVLNNEAQPIDEFNLENFPVENLECNMEELLQQEMSYDGLLDINIPLAAVSTNAPLVNLINNSSTTISSSSNIGCSTTTSSSSLSASAQLNQLQAQLQQQHQQQQQQQQQQQQQQLQQQQQQLLLNNNNNNNNSLELATQTASANLNARVQYSQPSVVTSPPSWVH.

T50 is subject to Phosphothreonine; by PKB/AKT1. Position 81 is a phosphoserine (S81). Residues 101–207 (WGNLSYADLI…ETSRYEKRRG (107 aa)) constitute a DNA-binding region (fork-head). 2 disordered regions span residues 188-210 (KSVR…GRAK) and 223-270 (GLND…SSCG). S196 bears the Phosphoserine; by PKB/AKT1 mark. Composition is skewed to polar residues over residues 227-236 (ATPSPSSSVS) and 261-270 (RASSNASSCG). S264 carries the post-translational modification Phosphoserine; by PKB/AKT1. Residues S267, S268, and S273 each carry the phosphoserine modification. Disordered stretches follow at residues 327–373 (SAAS…SLQP) and 398–451 (NSVT…QQQQ). The segment covering 334–343 (TQPPPPPYPA) has biased composition (pro residues). Residues 344 to 359 (PQQQQQQQPQQQQAYT) show a composition bias toward low complexity. Over residues 411 to 423 (SEPSSDSLNTYSN) the composition is skewed to polar residues. The span at 438–451 (QQQRQQQQQQQQQQ) shows a compositional bias: low complexity.

As to quaternary structure, interacts with melt.

The protein resides in the cytoplasm. It localises to the nucleus. Its function is as follows. Transcription factor involved in the regulation of the insulin signaling pathway. Consistently activates both the downstream target Thor\d4EBP and the feedback control target InR. Involved in negative regulation of the cell cycle, modulating cell growth and proliferation. In response to cellular stresses, such as nutrient deprivation or increased levels of reactive oxygen species, foxo is activated and inhibits growth through the action of target genes such as Thor. Foxo activated in the adult fat body can regulate lifespan in adults; an insulin peptide itself may function as one secondary messenger of insulin-regulated aging. Also regulates Lip4, homolog of human acid lipases, thereby acting as a key modulator of lipid metabolism by insulin signaling and integrates insulin responses to glucose and lipid homeostasis. In Drosophila willistoni (Fruit fly), this protein is Forkhead box protein O.